Consider the following 75-residue polypeptide: ATP synthase subunit c (75 aa).

Helical transmembrane passes span 9–29 (IGAG…GNIW) and 52–72 (IGFA…LILL).

Belongs to the ATPase C chain family. F-type ATPases have 2 components, F(1) - the catalytic core - and F(0) - the membrane proton channel. F(1) has five subunits: alpha(3), beta(3), gamma(1), delta(1), epsilon(1). F(0) has four main subunits: a(1), b(1), b'(1) and c(10-14). The alpha and beta chains form an alternating ring which encloses part of the gamma chain. F(1) is attached to F(0) by a central stalk formed by the gamma and epsilon chains, while a peripheral stalk is formed by the delta, b and b' chains.

It localises to the cell inner membrane. Its function is as follows. F(1)F(0) ATP synthase produces ATP from ADP in the presence of a proton or sodium gradient. F-type ATPases consist of two structural domains, F(1) containing the extramembraneous catalytic core and F(0) containing the membrane proton channel, linked together by a central stalk and a peripheral stalk. During catalysis, ATP synthesis in the catalytic domain of F(1) is coupled via a rotary mechanism of the central stalk subunits to proton translocation. Functionally, key component of the F(0) channel; it plays a direct role in translocation across the membrane. A homomeric c-ring of between 10-14 subunits forms the central stalk rotor element with the F(1) delta and epsilon subunits. The protein is ATP synthase subunit c of Rhodospirillum rubrum (strain ATCC 11170 / ATH 1.1.1 / DSM 467 / LMG 4362 / NCIMB 8255 / S1).